Here is a 495-residue protein sequence, read N- to C-terminus: Dihydrolipoyl dehydrogenase, mitochondrial (495 aa).

FAD contacts are provided by residues 59–68, Lys-77, and 169–171; these read EKNATLGGTC and SGS. Residues Cys-68 and Cys-73 are joined by a disulfide bond. NAD(+) is bound by residues 206–213, Glu-229, Val-264, and Gly-299; that span reads GAGVIGLE. Residues Asp-340 and 346 to 349 each bind FAD; that span reads MLAH. His-472 (proton acceptor) is an active-site residue.

This sequence belongs to the class-I pyridine nucleotide-disulfide oxidoreductase family. The cofactor is FAD.

The protein localises to the mitochondrion matrix. The catalysed reaction is N(6)-[(R)-dihydrolipoyl]-L-lysyl-[protein] + NAD(+) = N(6)-[(R)-lipoyl]-L-lysyl-[protein] + NADH + H(+). This is Dihydrolipoyl dehydrogenase, mitochondrial (dld-1) from Caenorhabditis elegans.